Here is a 72-residue protein sequence, read N- to C-terminus: Large ribosomal subunit protein bL31 (72 aa).

Zn(2+) contacts are provided by Cys16, Cys18, Cys37, and Cys40.

Belongs to the bacterial ribosomal protein bL31 family. Type A subfamily. As to quaternary structure, part of the 50S ribosomal subunit. It depends on Zn(2+) as a cofactor.

Functionally, binds the 23S rRNA. This is Large ribosomal subunit protein bL31 from Idiomarina loihiensis (strain ATCC BAA-735 / DSM 15497 / L2-TR).